The following is a 61-amino-acid chain: Large ribosomal subunit protein bL28 (61 aa).

Residues Met1–Arg26 are disordered.

The protein belongs to the bacterial ribosomal protein bL28 family.

This chain is Large ribosomal subunit protein bL28, found in Ligilactobacillus salivarius (strain UCC118) (Lactobacillus salivarius).